Reading from the N-terminus, the 187-residue chain is GTP cyclohydrolase 1 (187 aa).

The Zn(2+) site is built by cysteine 76, histidine 79, and cysteine 148.

Belongs to the GTP cyclohydrolase I family. In terms of assembly, toroid-shaped homodecamer, composed of two pentamers of five dimers.

The enzyme catalyses GTP + H2O = 7,8-dihydroneopterin 3'-triphosphate + formate + H(+). Its pathway is cofactor biosynthesis; 7,8-dihydroneopterin triphosphate biosynthesis; 7,8-dihydroneopterin triphosphate from GTP: step 1/1. The polypeptide is GTP cyclohydrolase 1 (Streptococcus agalactiae serotype Ia (strain ATCC 27591 / A909 / CDC SS700)).